The following is a 33-amino-acid chain: ATP synthase 27 kDa subunit, mitochondrial (33 aa).

The protein localises to the mitochondrion. The protein resides in the mitochondrion inner membrane. Mitochondrial membrane ATP synthase (F(1)F(0) ATP synthase or Complex V) produces ATP from ADP in the presence of a proton gradient across the membrane which is generated by electron transport complexes of the respiratory chain. F-type ATPases consist of two structural domains, F(1) - containing the extramembraneous catalytic core and F(0) - containing the membrane proton channel, linked together by a central stalk and a peripheral stalk. During catalysis, ATP synthesis in the catalytic domain of F(1) is coupled via a rotary mechanism of the central stalk subunits to proton translocation. Part of the complex F(0) domain. In Solanum tuberosum (Potato), this protein is ATP synthase 27 kDa subunit, mitochondrial.